Reading from the N-terminus, the 233-residue chain is Ribonuclease 3 (233 aa).

In terms of domain architecture, RNase III spans 8–135; the sequence is AQRFLEDKQL…VIGAIYLDQG (128 aa). Glu48 contacts Mg(2+). Asp52 is a catalytic residue. Mg(2+) contacts are provided by Asp121 and Glu124. Residue Glu124 is part of the active site. The DRBM domain maps to 161 to 230; it reads DYKSKLQELV…AQKVLQDNLV (70 aa).

This sequence belongs to the ribonuclease III family. In terms of assembly, homodimer. Requires Mg(2+) as cofactor.

It localises to the cytoplasm. The catalysed reaction is Endonucleolytic cleavage to 5'-phosphomonoester.. Digests double-stranded RNA. Involved in the processing of primary rRNA transcript to yield the immediate precursors to the large and small rRNAs (23S and 16S). Processes some mRNAs, and tRNAs when they are encoded in the rRNA operon. Processes pre-crRNA and tracrRNA of type II CRISPR loci if present in the organism. In Syntrophomonas wolfei subsp. wolfei (strain DSM 2245B / Goettingen), this protein is Ribonuclease 3.